A 167-amino-acid polypeptide reads, in one-letter code: Endoribonuclease YbeY (167 aa).

Residues His131, His135, and His141 each coordinate Zn(2+).

Belongs to the endoribonuclease YbeY family. Requires Zn(2+) as cofactor.

Its subcellular location is the cytoplasm. Its function is as follows. Single strand-specific metallo-endoribonuclease involved in late-stage 70S ribosome quality control and in maturation of the 3' terminus of the 16S rRNA. The protein is Endoribonuclease YbeY of Rickettsia africae (strain ESF-5).